Here is a 373-residue protein sequence, read N- to C-terminus: Putative F-box/kelch-repeat protein At3g19410 (373 aa).

Residues 1–46 (MTIPELPKDLIEEILCYVPATYLKRLRSTCKGWNRLFKDDRRFAKK) form the F-box domain. Kelch repeat units lie at residues 101–148 (RIFH…FVLG), 149–200 (YYQE…QCVS), and 329–373 (KLYI…EEKS).

The polypeptide is Putative F-box/kelch-repeat protein At3g19410 (Arabidopsis thaliana (Mouse-ear cress)).